A 445-amino-acid chain; its full sequence is D-serine transporter DsdX (445 aa).

The Cytoplasmic portion of the chain corresponds to 1 to 4; it reads MHSQ. The chain crosses the membrane as a helical span at residues 5–25; the sequence is IWVVSTLLISIVLIVLTIVKF. Over 26–28 the chain is Periplasmic; the sequence is KFH. The helical transmembrane segment at 29–49 threads the bilayer; that stretch reads PFLALLLASFFVGTMMGMGPL. The Cytoplasmic portion of the chain corresponds to 50–56; sequence DMVNAIE. The helical transmembrane segment at 57 to 77 threads the bilayer; that stretch reads SGIGGTLGFLAAVIGLGTILG. Residues 78–105 lie on the Periplasmic side of the membrane; the sequence is KMMEVSGAAERIGLTLQRCRWLSVDVIM. Residues 106–126 traverse the membrane as a helical segment; the sequence is VLVGLICGITLFVEVGVVLLI. At 127–139 the chain is on the cytoplasmic side; that stretch reads PLAFSIAKKTNTS. A helical membrane pass occupies residues 140–160; that stretch reads LLKLAIPLCTALMAVHCVVPP. The Periplasmic segment spans residues 161 to 177; that stretch reads HPAALYVANKLGADIGS. A helical transmembrane segment spans residues 178–198; the sequence is VIVYGLLVGLMASLIGGPLFL. The Cytoplasmic segment spans residues 199–223; sequence KFLGQRLPFKPVPTEFADLKVRDEK. The helical transmembrane segment at 224 to 244 threads the bilayer; it reads TLPSLGATLFTILLPIALMLV. The Periplasmic segment spans residues 245 to 257; it reads KTIAELNMARESG. The helical transmembrane segment at 258 to 278 threads the bilayer; sequence LYILVEFIGNPITAMFIAVFV. The Cytoplasmic portion of the chain corresponds to 279 to 301; it reads AYYVLGIRQHMSMGTMLTHTENG. A helical transmembrane segment spans residues 302–322; sequence FGSIANILLIIGAGGAFNAIL. The Periplasmic segment spans residues 323 to 342; sequence KSSSLADTLAVILSNMHMHP. Helical transmembrane passes span 343 to 363, 364 to 384, and 385 to 405; these read ILLAWLVALILHAAVGSATVA, MMGATAIVAPMLPLYPDISPE, and IIAIAIGSGAIGCTIVTDSLF. Residues 406–424 are Cytoplasmic-facing; that stretch reads WLVKQYCGATLNETFKYYT. Residues 425-445 form a helical membrane-spanning segment; it reads TATFIASVVALAGTFLLSFII.

This sequence belongs to the GntP permease family.

The protein resides in the cell inner membrane. Its function is as follows. A D-serine-specific transporter, may function as a H(+) symporter. This Escherichia coli (strain K12) protein is D-serine transporter DsdX.